The following is a 402-amino-acid chain: Phosphoglycerate kinase (402 aa).

Substrate-binding positions include 29–31 (DFN), Arg45, 69–72 (HLGR), Arg125, and Arg158. Residues Lys209, Glu331, and 357–360 (GGDT) each bind ATP.

The protein belongs to the phosphoglycerate kinase family.

The protein localises to the cytoplasm. The catalysed reaction is (2R)-3-phosphoglycerate + ATP = (2R)-3-phospho-glyceroyl phosphate + ADP. It functions in the pathway carbohydrate degradation; glycolysis; pyruvate from D-glyceraldehyde 3-phosphate: step 2/5. The polypeptide is Phosphoglycerate kinase (pgk) (Helicobacter pylori (strain ATCC 700392 / 26695) (Campylobacter pylori)).